The primary structure comprises 175 residues: Large ribosomal subunit protein uL10 (175 aa).

This sequence belongs to the universal ribosomal protein uL10 family. Part of the ribosomal stalk of the 50S ribosomal subunit. The N-terminus interacts with L11 and the large rRNA to form the base of the stalk. The C-terminus forms an elongated spine to which L12 dimers bind in a sequential fashion forming a multimeric L10(L12)X complex.

In terms of biological role, forms part of the ribosomal stalk, playing a central role in the interaction of the ribosome with GTP-bound translation factors. The polypeptide is Large ribosomal subunit protein uL10 (Delftia acidovorans (strain DSM 14801 / SPH-1)).